The sequence spans 482 residues: Ras GTPase-activating protein-binding protein 2 (482 aa).

The 123-residue stretch at 11–133 (VGREFVRQYY…FYVHNDMFRY (123 aa)) folds into the NTF2 domain. Positions 140–158 (DSEPELDEESEDEVEEEQE) are enriched in acidic residues. Disordered regions lie at residues 140–171 (DSEP…QENA) and 187–318 (EPLE…EQND). Phosphoserine occurs at positions 141, 149, and 225. The interval 142 to 220 (EPELDEESED…PQVEEKNLEE (79 aa)) is acidic disordered region. Over residues 191-225 (ESSHEPEPEPESETKTEELKPQVEEKNLEELEEKS) the composition is skewed to basic and acidic residues. Residue Thr227 is modified to Phosphothreonine. Ser235 is modified (phosphoserine). The segment covering 247–264 (ASVTSKNLPPSGTVSSSG) has biased composition (polar residues). Residue Lys281 forms a Glycyl lysine isopeptide (Lys-Gly) (interchain with G-Cter in SUMO2) linkage. Residues 290 to 300 (RVREQRPRERP) show a composition bias toward basic and acidic residues. In terms of domain architecture, RRM spans 331–409 (HQLFVGNLPH…VRLNVEEKKT (79 aa)). Lys392 carries the post-translational modification N6-succinyllysine. The segment at 404 to 476 (VEEKKTRAAR…GRGTGQMEGR (73 aa)) is RG-rich region. Positions 408 to 432 (KTRAARERETRGGGDDRRDIRRNDR) are enriched in basic and acidic residues. The disordered stretch occupies residues 408–482 (KTRAARERET…MEGRFTGQRR (75 aa)). A compositionally biased stretch (gly residues) spans 433–445 (GPGGPRGIVGGGM). At Arg457 the chain carries Omega-N-methylarginine. The residue at position 466 (Ser466) is a Phosphoserine. Arg468 carries the post-translational modification Omega-N-methylarginine.

In terms of assembly, forms homooligomers. Forms heterodimers with G3BP1. Interacts with NFKBIA (via N-terminus). Interacts (via NTF2 domain) with USP10; inhibiting stress granule formation. Interacts (via NTF2 domain) with CAPRIN1; promoting stress granule formation. Associates (via RG-rich region) with 40S ribosome subunits. Interacts with PABPC1. (Microbial infection) Interacts with non-structural protein 3 (via C-terminus) of Sindbis virus and Semliki forest virus; this interaction inhibits the formation of host stress granules on viral mRNAs and the nsp3-G3BP2 complexes bind viral RNAs and probably orchestrate the assembly of viral replication complexes. In terms of processing, (Microbial infection) Cleaved by foot-and-mouth disease virus leader protease; this cleavage suppresses the formation of cytoplasmic stress granules.

It localises to the cytoplasm. Its subcellular location is the stress granule. Under physiological conditions, G3BP2 adopts a compact state that is stabilized by intramolecular interactions between the RG-rich and the acidic regions that inhibit phase separation. Upon stress, polysomes disassemble and mRNAs are released in an unfolded protein-free state. Binding of unfolded mRNA to G3BP2 outcompetes the intramolecular interactions and RNA-bound G3BP2 adopts an expanded conformation in which the RG-rich region becomes exposed to engage in protein-protein and protein-RNA interactions, allowing physical cross-linking of RNA molecules to form protein-RNA condensates, leading to liquid-liquid phase separation (LLPS). Its function is as follows. Scaffold protein that plays an essential role in cytoplasmic stress granule formation which acts as a platform for antiviral signaling. Plays an essential role in stress granule formation. Stress granules are membraneless compartments that store mRNAs and proteins, such as stalled translation pre-initiation complexes, in response to stress. Promotes formation of stress granules phase-separated membraneless compartment by undergoing liquid-liquid phase separation (LLPS) upon unfolded RNA-binding: functions as a molecular switch that triggers RNA-dependent LLPS in response to a rise in intracellular free RNA concentrations. The protein is Ras GTPase-activating protein-binding protein 2 of Homo sapiens (Human).